Consider the following 648-residue polypeptide: Centrosomal protein of 63 kDa-B (648 aa).

Coiled coils occupy residues 19–188 (DSCE…QSHN) and 222–555 (EEEL…DAAS). Phosphoserine; by atm and atr is present on serine 559. Residues 611 to 644 (FLQEEEQRSHELLQRLNAHIEELKQESQRTVEHF) are a coiled coil.

It belongs to the CEP63 family. Post-translationally, phosphorylation at Ser-559 by atm and atr promotes its delocalization from the centrosome and impairs its ability to promote centrosome dependent spindle assembly.

Its subcellular location is the cytoplasm. It localises to the cytoskeleton. The protein resides in the microtubule organizing center. The protein localises to the centrosome. It is found in the centriole. Its function is as follows. Required for normal spindle assembly. Plays a key role in mother-centriole-dependent centriole duplication. Plays a role in DNA damage response. Following DNA damage, such as double-strand breaks (DSBs), is removed from centrosomes; this leads to the inactivation of spindle assembly and delay in mitotic progression. In Xenopus laevis (African clawed frog), this protein is Centrosomal protein of 63 kDa-B (cep63-b).